The sequence spans 167 residues: Small ribosomal subunit protein uS5 (167 aa).

The S5 DRBM domain occupies 12 to 75; the sequence is LQEKLITVNR…EKARRNMVTI (64 aa).

It belongs to the universal ribosomal protein uS5 family. In terms of assembly, part of the 30S ribosomal subunit. Contacts proteins S4 and S8.

With S4 and S12 plays an important role in translational accuracy. Functionally, located at the back of the 30S subunit body where it stabilizes the conformation of the head with respect to the body. This Buchnera aphidicola subsp. Schizaphis graminum (strain Sg) protein is Small ribosomal subunit protein uS5.